Consider the following 64-residue polypeptide: Beta-defensin 1 (64 aa).

The signal sequence occupies residues 1 to 20; that stretch reads MRLHHLLLVLFFLVLSAGSG. Residues 21–26 constitute a propeptide that is removed on maturation; the sequence is FTQGIR. 3 disulfide bridges follow: Cys31/Cys60, Cys38/Cys53, and Cys43/Cys61.

This sequence belongs to the beta-defensin family. Monomer. Homodimer.

Its subcellular location is the secreted. It localises to the membrane. In terms of biological role, has bactericidal activity. May act as a ligand for C-C chemokine receptor CCR6. Positively regulates the sperm motility and bactericidal activity in a CCR6-dependent manner. Binds to CCR6 and triggers Ca2+ mobilization in the sperm which is important for its motility. The protein is Beta-defensin 1 (DEFB1) of Capra hircus (Goat).